Consider the following 198-residue polypeptide: Protein GrpE (198 aa).

It belongs to the GrpE family. Homodimer.

The protein localises to the cytoplasm. Functionally, participates actively in the response to hyperosmotic and heat shock by preventing the aggregation of stress-denatured proteins, in association with DnaK and GrpE. It is the nucleotide exchange factor for DnaK and may function as a thermosensor. Unfolded proteins bind initially to DnaJ; upon interaction with the DnaJ-bound protein, DnaK hydrolyzes its bound ATP, resulting in the formation of a stable complex. GrpE releases ADP from DnaK; ATP binding to DnaK triggers the release of the substrate protein, thus completing the reaction cycle. Several rounds of ATP-dependent interactions between DnaJ, DnaK and GrpE are required for fully efficient folding. This Actinobacillus pleuropneumoniae serotype 7 (strain AP76) protein is Protein GrpE.